A 491-amino-acid chain; its full sequence is Katanin p60 ATPase-containing subunit A1 (491 aa).

Residues 1-29 (MSLQMIVENVKLAREYALLGNYDSAMVYY) form an interaction with KATNB1 region. Positions 1–75 (MSLQMIVENV…VKDIMKTLES (75 aa)) are interaction with dynein and NDEL1. Residues 1-185 (MSLQMIVENV…EPEANKFDGT (185 aa)) form an interaction with microtubules; sufficient for microtubule severing activity region. Residue S42 is modified to Phosphoserine; by DYRK2. The segment at 101–182 (PVPVERRPLP…AVTEPEANKF (82 aa)) is disordered. Basic and acidic residues predominate over residues 145 to 169 (HNDRGKAVRSREKKEQSKGREEKNK). 249–256 (GPPGTGKT) is an ATP binding site.

The protein belongs to the AAA ATPase family. Katanin p60 subunit A1 subfamily. Can homooligomerize into hexameric rings, which may be promoted by interaction with microtubules. Interacts with KATNB1, which may serve as a targeting subunit. Interacts with ASPM; the katanin complex formation KATNA1:KATNB1 is required for the association of ASPM. Interacts with dynein and NDEL1. Associates with the E3 ligase complex containing DYRK2, EDD/UBR5, DDB1 and DCAF1 proteins (EDVP complex). Interacts with KLHL42 (via the kelch domains). Interacts with CUL3; the interaction is enhanced by KLHL42. Interacts with KATNB1 and KATNBL1. Interacts with CAMSAP2 and CAMSAP3; leading to regulate the length of CAMSAP-decorated microtubule stretches. Post-translationally, phosphorylation by DYRK2 triggers ubiquitination and subsequent degradation. Ubiquitinated by the BCR(KLHL42) E3 ubiquitin ligase complex, leading to its proteasomal degradation. Ubiquitinated by the EDVP E3 ligase complex and subsequently targeted for proteasomal degradation.

The protein localises to the cytoplasm. It is found in the midbody. It localises to the cytoskeleton. Its subcellular location is the microtubule organizing center. The protein resides in the centrosome. The protein localises to the spindle pole. It is found in the spindle. It catalyses the reaction n ATP + n H2O + a microtubule = n ADP + n phosphate + (n+1) alpha/beta tubulin heterodimers.. With respect to regulation, ATPase activity is stimulated by microtubules, which promote homooligomerization. ATP-dependent microtubule severing is stimulated by interaction with KATNB1. Catalytic subunit of a complex which severs microtubules in an ATP-dependent manner. Microtubule severing may promote rapid reorganization of cellular microtubule arrays and the release of microtubules from the centrosome following nucleation. Microtubule release from the mitotic spindle poles may allow depolymerization of the microtubule end proximal to the spindle pole, leading to poleward microtubule flux and poleward motion of chromosome. The function in regulating microtubule dynamics at spindle poles seems to depend on the association of the katanin KATNA1:KATNB1 complex with ASPM which recruits it to microtubules. Reversely KATNA1:KATNB1 can enhance ASPM blocking activity on microtubule minus-end growth. Microtubule release within the cell body of neurons may be required for their transport into neuronal processes by microtubule-dependent motor proteins. This transport is required for axonal growth. This chain is Katanin p60 ATPase-containing subunit A1 (Katna1), found in Mus musculus (Mouse).